The following is a 534-amino-acid chain: NAD(P)H-quinone oxidoreductase subunit 2 (534 aa).

A run of 14 helical transmembrane segments spans residues 15 to 35 (ILPE…DLIL), 42 to 62 (WIGY…YFQW), 79 to 99 (LSIV…LMSI), 109 to 129 (LAEF…LSGA), 132 to 152 (LVMI…LTGY), 167 to 187 (LLIG…LYGL), 210 to 230 (LGLV…ISAA), 244 to 264 (PTPV…ALAI), 280 to 300 (FVFT…ALAQ), 306 to 326 (MLAY…IAGT), 334 to 354 (IFYL…IILF), 378 to 398 (LGLS…GFFG), 410 to 432 (GLYW…YIRV), and 466 to 486 (VGLV…NPLF).

This sequence belongs to the complex I subunit 2 family. In terms of assembly, NDH-1 can be composed of about 15 different subunits; different subcomplexes with different compositions have been identified which probably have different functions.

It is found in the cellular thylakoid membrane. The catalysed reaction is a plastoquinone + NADH + (n+1) H(+)(in) = a plastoquinol + NAD(+) + n H(+)(out). It carries out the reaction a plastoquinone + NADPH + (n+1) H(+)(in) = a plastoquinol + NADP(+) + n H(+)(out). NDH-1 shuttles electrons from an unknown electron donor, via FMN and iron-sulfur (Fe-S) centers, to quinones in the respiratory and/or the photosynthetic chain. The immediate electron acceptor for the enzyme in this species is believed to be plastoquinone. Couples the redox reaction to proton translocation, and thus conserves the redox energy in a proton gradient. Cyanobacterial NDH-1 also plays a role in inorganic carbon-concentration. This is NAD(P)H-quinone oxidoreductase subunit 2 from Nostoc punctiforme (strain ATCC 29133 / PCC 73102).